A 575-amino-acid chain; its full sequence is Inactive terpenoid synthase 20, chloroplastic (575 aa).

A chloroplast-targeting transit peptide spans 1-52; that stretch reads MEAITKNGSLSQTLVHCGPKSLSSFIPVRCLRFSKNPFPKKLVVTRARTSIN. Mg(2+)-binding residues include aspartate 332, aspartate 336, aspartate 474, threonine 478, and glutamate 482. The short motif at 332 to 336 is the DDXXD motif element; the sequence is DDLYD.

The protein belongs to the terpene synthase family. Tpsa subfamily. As to expression, predominantly expressed in roots but also in leaves and stems.

The protein resides in the plastid. It localises to the chloroplast. Does not possess diterpene synthase activity. This Arabidopsis thaliana (Mouse-ear cress) protein is Inactive terpenoid synthase 20, chloroplastic.